Reading from the N-terminus, the 278-residue chain is MTVLHSVDFFPSGKAPVAIEPRLPQAAFPEHHHDFHEIVIVEHCTGIHVFNGQPYTISGGTVCFVRDHDRHLYEHTDNLCLTNVLWRSPDAFQFLAGLEQLLPQEQDGYYPSHWRVNQSALQQVRQLVGLMERAGDGMDAPAVANREILFMQLLVLLRRSSLMEGATNNDAKLNQLMAWLEDHFAEEVCWEAVAEQFSLSLRTLHRQLKQHTGLTPQRYLNRLRLIKARHLLRHSDHSVTEIAYRCGFGDSNHFSTLFRREFNWSPRDIRQGRDAIIQ.

The region spanning 174–272 (NQLMAWLEDH…NWSPRDIRQG (99 aa)) is the HTH araC/xylS-type domain. 2 DNA-binding regions (H-T-H motif) span residues 191–212 (EAVAEQFSLSLRTLHRQLKQHT) and 239–262 (VTEIAYRCGFGDSNHFSTLFRREF).

Binds DNA as a dimer.

It is found in the cytoplasm. Functionally, activates expression of the rhaBAD and rhaT operons. This Salmonella dublin (strain CT_02021853) protein is HTH-type transcriptional activator RhaS.